Reading from the N-terminus, the 346-residue chain is NADH-ubiquinone oxidoreductase chain 2 (346 aa).

The next 11 helical transmembrane spans lie at 3 to 23 (PLILTIILMTVFLGTMIVMAS), 25 to 45 (HWLMIWIGFEMNLLAIIPILM), 59 to 79 (YFLTQATASMLLMMAIIINLM), 96 to 116 (IIMTLALAMKLGLTPFHFWVP), 122 to 142 (ISLTSGLILLTWQKLAPMSIL), 149 to 169 (INLNILLTMAVLSILVGGWGG), 178 to 198 (IMAYSSIAHMGWMAAILVYNP), 200 to 220 (LTMLNMLIYIMMTLTMFMLFI), 237 to 257 (APLITTLILITLLSMGGLPPL), 274 to 294 (SSIILPTLMAIMALLNLYFYM), and 322 to 342 (ITLLPPLIIASSLLLPLTPML).

Belongs to the complex I subunit 2 family. In terms of assembly, core subunit of respiratory chain NADH dehydrogenase (Complex I) which is composed of 45 different subunits. Interacts with TMEM242.

The protein resides in the mitochondrion inner membrane. The enzyme catalyses a ubiquinone + NADH + 5 H(+)(in) = a ubiquinol + NAD(+) + 4 H(+)(out). In terms of biological role, core subunit of the mitochondrial membrane respiratory chain NADH dehydrogenase (Complex I) which catalyzes electron transfer from NADH through the respiratory chain, using ubiquinone as an electron acceptor. Essential for the catalytic activity and assembly of complex I. This is NADH-ubiquinone oxidoreductase chain 2 from Equus asinus (Donkey).